Here is a 467-residue protein sequence, read N- to C-terminus: A-type ATP synthase subunit B (467 aa).

Residues 95–114 (GKGQPRDHMPLPPPEDFRDV) form a disordered region.

It belongs to the ATPase alpha/beta chains family. As to quaternary structure, has multiple subunits with at least A(3), B(3), C, D, E, F, H, I and proteolipid K(x).

It localises to the cell membrane. Component of the A-type ATP synthase that produces ATP from ADP in the presence of a proton gradient across the membrane. The B chain is a regulatory subunit. In Pyrobaculum islandicum (strain DSM 4184 / JCM 9189 / GEO3), this protein is A-type ATP synthase subunit B.